The chain runs to 172 residues: Ribosome maturation factor RimM (172 aa).

Positions 96–168 (DGEFYYHEII…RVQVELMEGL (73 aa)) constitute a PRC barrel domain.

This sequence belongs to the RimM family. Binds ribosomal protein uS19.

Its subcellular location is the cytoplasm. Its function is as follows. An accessory protein needed during the final step in the assembly of 30S ribosomal subunit, possibly for assembly of the head region. Essential for efficient processing of 16S rRNA. May be needed both before and after RbfA during the maturation of 16S rRNA. It has affinity for free ribosomal 30S subunits but not for 70S ribosomes. This Streptococcus agalactiae serotype III (strain NEM316) protein is Ribosome maturation factor RimM.